A 199-amino-acid polypeptide reads, in one-letter code: Recombination protein RecR (199 aa).

The C4-type zinc-finger motif lies at 57–72 (CTVCGHITDIDPCAIC). One can recognise a Toprim domain in the interval 80-176 (TVVCVVQDSR…RVTRLAHGLP (97 aa)).

This sequence belongs to the RecR family.

May play a role in DNA repair. It seems to be involved in an RecBC-independent recombinational process of DNA repair. It may act with RecF and RecO. In Exiguobacterium sp. (strain ATCC BAA-1283 / AT1b), this protein is Recombination protein RecR.